The following is a 182-amino-acid chain: MKEELVKLIIDSGCIKFGHFILTSGKESNYYIDIKSLITNPKALKLIAKMIKEESRKLGIEYDKVAGPELGAVPIATALSLETDKPLLIIRKKKKEHGTGKLIEGEISPGDRVLLVEDVTTTGGSVIRAAKILKEHGAEVVGIFVVVDREEGARENIEKEGFKLYPLVLVSDLFEAAGVSKD.

5-phospho-alpha-D-ribose 1-diphosphate contacts are provided by residues R91, K92, K95, H97, and 117-125 (EDVTTTGGS). T121 and R149 together coordinate orotate.

Belongs to the purine/pyrimidine phosphoribosyltransferase family. PyrE subfamily. In terms of assembly, homodimer. Mg(2+) serves as cofactor.

The enzyme catalyses orotidine 5'-phosphate + diphosphate = orotate + 5-phospho-alpha-D-ribose 1-diphosphate. It functions in the pathway pyrimidine metabolism; UMP biosynthesis via de novo pathway; UMP from orotate: step 1/2. In terms of biological role, catalyzes the transfer of a ribosyl phosphate group from 5-phosphoribose 1-diphosphate to orotate, leading to the formation of orotidine monophosphate (OMP). The sequence is that of Orotate phosphoribosyltransferase from Pyrococcus abyssi (strain GE5 / Orsay).